The primary structure comprises 182 residues: Large ribosomal subunit protein uL5 (182 aa).

The protein belongs to the universal ribosomal protein uL5 family. Part of the 50S ribosomal subunit; part of the 5S rRNA/L5/L18/L25 subcomplex. Contacts the 5S rRNA and the P site tRNA. Forms a bridge to the 30S subunit in the 70S ribosome.

Its function is as follows. This is one of the proteins that bind and probably mediate the attachment of the 5S RNA into the large ribosomal subunit, where it forms part of the central protuberance. In the 70S ribosome it contacts protein S13 of the 30S subunit (bridge B1b), connecting the 2 subunits; this bridge is implicated in subunit movement. Contacts the P site tRNA; the 5S rRNA and some of its associated proteins might help stabilize positioning of ribosome-bound tRNAs. The protein is Large ribosomal subunit protein uL5 of Thermosipho melanesiensis (strain DSM 12029 / CIP 104789 / BI429).